We begin with the raw amino-acid sequence, 374 residues long: WAT1-related protein At1g60050 (374 aa).

10 helical membrane passes run 11-31 (IVPF…TILA), 42-62 (FVFI…YSFY), 82-102 (IFLL…LGLS), 107-127 (IVVC…SLAL), 145-165 (IGTL…GPFI), 194-214 (WALG…WNII), 228-248 (VVSA…AFME), 255-275 (ELKL…GSII), 292-312 (VPLF…SFFV), and 315-335 (LHYG…LIMW). In terms of domain architecture, EamA spans 26-155 (ALTILAKTAL…GTLICFTGAF (130 aa)).

Belongs to the drug/metabolite transporter (DMT) superfamily. Plant drug/metabolite exporter (P-DME) (TC 2.A.7.4) family.

Its subcellular location is the membrane. The chain is WAT1-related protein At1g60050 from Arabidopsis thaliana (Mouse-ear cress).